Reading from the N-terminus, the 324-residue chain is Glycerol-3-phosphate dehydrogenase [NAD(P)+] (324 aa).

Positions 10, 11, 31, and 106 each coordinate NADPH. 3 residues coordinate sn-glycerol 3-phosphate: K106, G134, and S136. Residue A138 participates in NADPH binding. The sn-glycerol 3-phosphate site is built by K189, D244, S254, R255, and N256. The Proton acceptor role is filled by K189. Position 255 (R255) interacts with NADPH. Positions 279 and 281 each coordinate NADPH.

The protein belongs to the NAD-dependent glycerol-3-phosphate dehydrogenase family.

The protein resides in the cytoplasm. It catalyses the reaction sn-glycerol 3-phosphate + NAD(+) = dihydroxyacetone phosphate + NADH + H(+). It carries out the reaction sn-glycerol 3-phosphate + NADP(+) = dihydroxyacetone phosphate + NADPH + H(+). It functions in the pathway membrane lipid metabolism; glycerophospholipid metabolism. Catalyzes the reduction of the glycolytic intermediate dihydroxyacetone phosphate (DHAP) to sn-glycerol 3-phosphate (G3P), the key precursor for phospholipid synthesis. This chain is Glycerol-3-phosphate dehydrogenase [NAD(P)+], found in Ehrlichia canis (strain Jake).